A 317-amino-acid polypeptide reads, in one-letter code: Flavin-dependent thymidylate synthase (317 aa).

Ser46 contacts FAD. Positions 55–166 (FEWKKEKWIE…ELETDMDFYT (112 aa)) are insert. The 218-residue stretch at 100–317 (AVKERIKEAF…YRGTDKKNVI (218 aa)) folds into the ThyX domain. Residues 178 to 181 (QWMR), 189 to 193 (EVSKR), and Arg259 contribute to the dUMP site. FAD contacts are provided by residues 181-183 (RHR) and Glu189. The short motif at 181 to 191 (RHRFGSYNEVS) is the ThyX motif element. Asn281 is an FAD binding site. DUMP is bound at residue Arg286. Arg286 acts as the Involved in ionization of N3 of dUMP, leading to its activation in catalysis.

The protein belongs to the thymidylate synthase ThyX family. In terms of assembly, homotetramer. It depends on FAD as a cofactor.

The enzyme catalyses dUMP + (6R)-5,10-methylene-5,6,7,8-tetrahydrofolate + NADPH + H(+) = dTMP + (6S)-5,6,7,8-tetrahydrofolate + NADP(+). It functions in the pathway pyrimidine metabolism; dTTP biosynthesis. In terms of biological role, catalyzes the reductive methylation of 2'-deoxyuridine-5'-monophosphate (dUMP) to 2'-deoxythymidine-5'-monophosphate (dTMP) while utilizing 5,10-methylenetetrahydrofolate (mTHF) as the methyl donor, and NADPH and FADH(2) as the reductant. This is Flavin-dependent thymidylate synthase from Aquifex aeolicus (strain VF5).